The chain runs to 622 residues: Pyranose 2-oxidase (622 aa).

Residues 1–28 form the signal peptide; that stretch reads MSTSSSDPFYNFAKTSFKSAAAQKASAT. Residues 29–38 constitute a propeptide that is removed on maturation; it reads SLPPLPGPDQ. Histidine 167 carries the tele-8alpha-FAD histidine modification. Substrate contacts are provided by glutamine 448 and histidine 450. Catalysis depends on histidine 548, which acts as the Proton acceptor. The active site involves asparagine 593.

Belongs to the GMC oxidoreductase family. Homotetramer. The cofactor is FAD.

Its subcellular location is the periplasm. It catalyses the reaction D-glucose + O2 = 2-dehydro-D-glucose + H2O2. Functionally, catalyzes the oxidation of various aldopyranoses and disaccharides on carbon-2 to the corresponding 2-keto sugars concomitant with the reduction of O(2) to H(2)O(2). Plays an important role in lignin degradation of wood rot fungi by supplying the essential cosubstrate H(2)O(2) for the ligninolytic peroxidases, lignin peroxidase and manganese-dependent peroxidase. This Trametes pubescens (White-rot fungus) protein is Pyranose 2-oxidase (p2ox).